Here is a 199-residue protein sequence, read N- to C-terminus: Peptidyl-tRNA hydrolase (199 aa).

A tRNA-binding site is contributed by Tyr-18. His-23 functions as the Proton acceptor in the catalytic mechanism. TRNA-binding residues include Tyr-72, Asn-74, and Asn-120.

It belongs to the PTH family. In terms of assembly, monomer.

It is found in the cytoplasm. It carries out the reaction an N-acyl-L-alpha-aminoacyl-tRNA + H2O = an N-acyl-L-amino acid + a tRNA + H(+). Its function is as follows. Hydrolyzes ribosome-free peptidyl-tRNAs (with 1 or more amino acids incorporated), which drop off the ribosome during protein synthesis, or as a result of ribosome stalling. In terms of biological role, catalyzes the release of premature peptidyl moieties from peptidyl-tRNA molecules trapped in stalled 50S ribosomal subunits, and thus maintains levels of free tRNAs and 50S ribosomes. This is Peptidyl-tRNA hydrolase from Bifidobacterium adolescentis (strain ATCC 15703 / DSM 20083 / NCTC 11814 / E194a).